The primary structure comprises 548 residues: Chaperonin GroEL (548 aa).

Residues 30-33 (TLGP), K51, 87-91 (DGTTT), G415, 479-481 (NAA), and D495 each bind ATP.

Belongs to the chaperonin (HSP60) family. As to quaternary structure, forms a cylinder of 14 subunits composed of two heptameric rings stacked back-to-back. Interacts with the co-chaperonin GroES.

The protein localises to the cytoplasm. The catalysed reaction is ATP + H2O + a folded polypeptide = ADP + phosphate + an unfolded polypeptide.. Functionally, together with its co-chaperonin GroES, plays an essential role in assisting protein folding. The GroEL-GroES system forms a nano-cage that allows encapsulation of the non-native substrate proteins and provides a physical environment optimized to promote and accelerate protein folding. This is Chaperonin GroEL from Klebsiella pneumoniae (strain 342).